Consider the following 323-residue polypeptide: Galectin-4 (323 aa).

Galectin domains follow at residues 19–150 (YYKP…INFI) and 194–323 (YKTR…YVQI). 256–262 (WGAEERK) contributes to the a beta-D-galactoside binding site.

In terms of assembly, monomer.

Functionally, galectin that binds lactose and a related range of sugars. May be involved in the assembly of adherens junctions. This chain is Galectin-4 (LGALS4), found in Sus scrofa (Pig).